Here is a 187-residue protein sequence, read N- to C-terminus: GTP cyclohydrolase 1 (187 aa).

3 residues coordinate Zn(2+): C78, H81, and C150.

It belongs to the GTP cyclohydrolase I family. As to quaternary structure, homomer.

The enzyme catalyses GTP + H2O = 7,8-dihydroneopterin 3'-triphosphate + formate + H(+). Its pathway is cofactor biosynthesis; 7,8-dihydroneopterin triphosphate biosynthesis; 7,8-dihydroneopterin triphosphate from GTP: step 1/1. The polypeptide is GTP cyclohydrolase 1 (Brevibacillus brevis (strain 47 / JCM 6285 / NBRC 100599)).